The sequence spans 651 residues: MVLAGVAQRPWIKSCDRAFYGSMALSAATTEAPEQTGFWALTLGGIGVVFGDIGTSPLYAFREAVAGAAGGAPASRVLVLGVLSLILWALLIVVTAKYVLLLLRADNNGEGGTLSLMALGRRALGRRSLFLLVLGVIGASMFIGDSMITPAISVLSAIEGLKIAAPALEHYVVPLTVLVLVLLFGVQSHGTAIVARFFGPVMLVWFATLAAMGAMHIMDDPSVLAAINPWYAAQFLASHGTIGLVTLGAVFLAVTGGEALYADLGHFGRRPIQTAWLGFVLPALLINYFGQGALVLSNPAALENPFYKMVPEALVLPLTLMATAATVIASQAVITGAFSLISQAVQLGLLPRFEVRYTSETNAGQIYLPRVNALLLIGVLLLVLLFQTSSRLASAYGIAVSTTMVVDGIMGFVVIWKLWRWSWPAAALVILPLVLVDAMFFSANLLKLLDGAWVPLLFGLAMAVVIWTWRRGVALLMIKSRRAEVPLDDLIGSLEKHPPHIVKGTAVFLTADAEFVPPALLHNLKHNKVLHEHNVILTIETMHTPRVEAADRIRLVKVSEKFSKVALRFGFMETPNVPKALVLARKLGWEFDIMSTSFFVSRRSLKPAAQSEMWRWQTKLFVALAKSANDATDYFQIPTGRVVEVGAQVTI.

Transmembrane regions (helical) follow at residues 38–58 (FWAL…TSPL), 77–97 (VLVL…VTAK), 129–149 (LFLL…SMIT), 166–186 (PALE…LFGV), 197–217 (FFGP…AMHI), 242–262 (IGLV…ALYA), 276–296 (WLGF…ALVL), 314–334 (LVLP…QAVI), 366–386 (IYLP…VLLF), 396–416 (YGIA…VVIW), 421–441 (WSWP…AMFF), and 448–468 (LLDG…VIWT).

It belongs to the HAK/KUP transporter (TC 2.A.72) family.

The protein resides in the cell inner membrane. The catalysed reaction is K(+)(in) + H(+)(in) = K(+)(out) + H(+)(out). Transport of potassium into the cell. Likely operates as a K(+):H(+) symporter. The polypeptide is Probable potassium transport system protein Kup 3 (Rhodopseudomonas palustris (strain ATCC BAA-98 / CGA009)).